Consider the following 142-residue polypeptide: Pro-Viral epidermal growth factor (142 aa).

The N-terminal stretch at methionine 1 to alanine 19 is a signal peptide. Topologically, residues aspartate 20–leucine 104 are extracellular. N-linked (GlcNAc...) asparagine; by host glycosylation is present at asparagine 34. A disulfide bridge links cysteine 71 with cysteine 80. Residues glycine 105–phenylalanine 125 traverse the membrane as a helical segment. Residues threonine 126–leucine 142 are Cytoplasmic-facing.

The protein belongs to the orthopoxvirus OPG019 family. In terms of assembly, interacts with host EGFR. In terms of processing, cleaved at the cell surface by host ADAM10, thereby releasing the secreted form of VGF.

The protein resides in the host membrane. Its subcellular location is the secreted. Stimulates cellular proliferation (hyperplasia)and mobility around infected cells to promote rapid and efficient spread of infection. This effect is beneficial for virus replication in vivo, because poxviruses replicate possibly better in proliferating cells than in quiescent cells. Acts by binding host EGFR, inducing its dimerization, autophosphorylation and leading to activation of several cellular pathways regulating cell proliferation or cell survival. The activation by host EGFR of mitogen activated protein kinases (MAPK) and extracellular-signal regulated kinases (ERK) are essential for the positive effect of vaccinia growth factor on poxvirus virulence in vivo. This is Pro-Viral epidermal growth factor (OPG019) from Cynomys gunnisoni (Gunnison's prairie dog).